Reading from the N-terminus, the 1917-residue chain is Diacylglycerol kinase eta (1917 aa).

Residues 1 to 10 (MSHLKLDTLH) show a composition bias toward basic and acidic residues. The tract at residues 1–37 (MSHLKLDTLHVQRSPRGSRRSSRSSGRSSACSSGSIS) is disordered. The span at 23-37 (RSSGRSSACSSGSIS) shows a compositional bias: low complexity. The region spanning 82–175 (AIIKEGFLLK…WLGSLKTATA (94 aa)) is the PH domain. Phorbol-ester/DAG-type zinc fingers lie at residues 195–245 (HHHW…IANC) and 268–319 (PHQW…AVAC). One can recognise a DAGKc domain in the interval 350–486 (GNFSPLLVFV…DRWSIMVFEK (137 aa)). Disordered stretches follow at residues 1015–1053 (TTLC…PPRI), 1114–1149 (LEQQ…SEDE), and 1380–1399 (KDKD…EETN). Polar residues predominate over residues 1128–1145 (PEQQQTPTNKGPNSLATT). The SAM domain maps to 1854–1917 (WSVNEVVTWL…LQAIKDLSEN (64 aa)).

Belongs to the eukaryotic diacylglycerol kinase family.

It localises to the cytoplasm. It carries out the reaction a 1,2-diacyl-sn-glycerol + ATP = a 1,2-diacyl-sn-glycero-3-phosphate + ADP + H(+). Its function is as follows. Phosphorylates diacylglycerol (DAG) to generate phosphatidic acid (PA). This chain is Diacylglycerol kinase eta, found in Drosophila yakuba (Fruit fly).